The sequence spans 1589 residues: Sterile alpha motif domain-containing protein 9 (1589 aa).

One can recognise an SAM domain in the interval 14-78 (WTKEDVNQWL…ELFKELRKTA (65 aa)). Positions 83–135 (IQTSKMGKPSKNAPKDQTVSQKERRETSKQKQKGKENPDMANPSAMSTTAKGS) are disordered. Positions 103–120 (QKERRETSKQKQKGKENP) are enriched in basic and acidic residues.

As to quaternary structure, interacts with RGL2. Interacts with EEA1. (Microbial infection) Interacts with myxoma virus protein M062. In terms of tissue distribution, widely expressed. Very low levels are detected in skeletal muscle. Not detected in brain. Down-regulated in aggressive fibromatosis, as well as in breast and colon cancers. Up-regulated in fibroblasts from patients with normophosphatemic tumoral calcinosis (NFTC).

The protein resides in the cytoplasm. Double-stranded nucleic acid binding that acts as an antiviral factor by playing an essential role in the formation of cytoplasmic antiviral granules. May play a role in the inflammatory response to tissue injury and the control of extra-osseous calcification, acting as a downstream target of TNF-alpha signaling. Involved in the regulation of EGR1, in coordination with RGL2. May be involved in endosome fusion. The polypeptide is Sterile alpha motif domain-containing protein 9 (SAMD9) (Homo sapiens (Human)).